A 177-amino-acid chain; its full sequence is Peptidyl-prolyl cis-trans isomerase H (177 aa).

Alanine 2 is modified (N-acetylalanine). In terms of domain architecture, PPIase cyclophilin-type spans 14–176 (FFDVSIGGQE…LPVVISQCGE (163 aa)).

This sequence belongs to the cyclophilin-type PPIase family. PPIase H subfamily. As to quaternary structure, interacts directly with PRPF4. Part of a heteromeric complex containing PPIH, PRPF3 and PRPF4 that is stable in the absence of RNA. Component of the U4/U6-U5 tri-snRNP complex composed of the U4, U6 and U5 snRNAs and at least PRPF3, PRPF4, PRPF6, PRPF8, PRPF31, SNRNP200, TXNL4A, SNRNP40, DDX23, CD2BP2, PPIH, SNU13, EFTUD2, SART1 and USP39. Heterodimer with PRPF18.

The protein resides in the nucleus speckle. The protein localises to the cytoplasm. It catalyses the reaction [protein]-peptidylproline (omega=180) = [protein]-peptidylproline (omega=0). Inhibited by cyclosporin A. Functionally, PPIase that catalyzes the cis-trans isomerization of proline imidic peptide bonds in oligopeptides and may therefore assist protein folding. Participates in pre-mRNA splicing. May play a role in the assembly of the U4/U5/U6 tri-snRNP complex, one of the building blocks of the spliceosome. May act as a chaperone. The protein is Peptidyl-prolyl cis-trans isomerase H (PPIH) of Homo sapiens (Human).